A 614-amino-acid polypeptide reads, in one-letter code: Zinc metalloproteinase dpy-31 (614 aa).

The signal sequence occupies residues 1–24; sequence MSLLRCTTLLLVVVAIALPPCILG. Positions 25–150 are excised as a propeptide; the sequence is YSLHDGSRLD…KTGQRRVKRK (126 aa). Residues 150–349 form the Peptidase M12A domain; that stretch reads KFIGSDLRRW…IRLMNKIYCS (200 aa). An N-linked (GlcNAc...) asparagine glycan is attached at Asn-190. 5 cysteine pairs are disulfide-bonded: Cys-193–Cys-348, Cys-216–Cys-237, Cys-352–Cys-372, Cys-374–Cys-383, and Cys-394–Cys-422. A Zn(2+)-binding site is contributed by His-245. Residue Glu-246 is part of the active site. 2 residues coordinate Zn(2+): His-249 and His-255. In terms of domain architecture, EGF-like spans 344 to 384; sequence NKIYCSNVCSRKLPCQRGGYTDPRRCDRCRCPDGFTGQFCE. The CUB domain maps to 394–510; it reads CGGRIQVNGG…RGFEARARAL (117 aa). An N-linked (GlcNAc...) asparagine glycan is attached at Asn-461. In terms of domain architecture, TSP type-1 spans 513-562; the sequence is NGQWASWSPWTPCTASCGACGSRMRTRVCSHGACAGEPVENQVCNTHPCN. 3 cysteine pairs are disulfide-bonded: Cys-525-Cys-556, Cys-529-Cys-561, and Cys-541-Cys-546.

Zn(2+) is required as a cofactor.

Its subcellular location is the secreted. With respect to regulation, inhibited by marimastat and tripeptide hydroxamic acids. Inhibited by 1,10-phenanthroline. Its function is as follows. Metalloprotease which cleaves the carboxyl terminus of procollagens to mature collagens. Probably involved in cuticular collagen maturation. This chain is Zinc metalloproteinase dpy-31, found in Teladorsagia circumcincta (Brown stomach worm).